The following is a 162-amino-acid chain: Protein lon-8 (162 aa).

A signal peptide spans 1–23 (MRNSRFCAILAVISAISVSYVLA).

It localises to the secreted. Secreted protein that is involved in larval elongation, early adult growth and male tail development. This is Protein lon-8 from Caenorhabditis elegans.